A 321-amino-acid polypeptide reads, in one-letter code: Glycerol-3-phosphate phosphatase (321 aa).

Residue Asp34 is the Nucleophile of the active site. Asp34, Asp36, and Asp260 together coordinate Mg(2+). Asp36 functions as the Proton donor in the catalytic mechanism.

This sequence belongs to the HAD-like hydrolase superfamily. CbbY/CbbZ/Gph/YieH family. As to quaternary structure, homodimer. Requires Mg(2+) as cofactor. As to expression, detected in all tissues including red cells, lymphocytes and cultured fibroblasts (at protein level). The highest activities occur in skeletal muscle and cardiac muscle.

It catalyses the reaction O-phospho-L-tyrosyl-[protein] + H2O = L-tyrosyl-[protein] + phosphate. The catalysed reaction is sn-glycerol 1-phosphate + H2O = glycerol + phosphate. It carries out the reaction sn-glycerol 3-phosphate + H2O = glycerol + phosphate. Its function is as follows. Glycerol-3-phosphate phosphatase hydrolyzing glycerol-3-phosphate into glycerol. Thereby, regulates the cellular levels of glycerol-3-phosphate a metabolic intermediate of glucose, lipid and energy metabolism. Was also shown to have a 2-phosphoglycolate phosphatase activity and a tyrosine-protein phosphatase activity. However, their physiological relevance is unclear. In vitro, also has a phosphatase activity toward ADP, ATP, GDP and GTP. The protein is Glycerol-3-phosphate phosphatase of Homo sapiens (Human).